The chain runs to 627 residues: Altered inheritance of mitochondria protein 9, mitochondrial (627 aa).

The transit peptide at 1-43 directs the protein to the mitochondrion; sequence MIRYTVAGHSRRCVVGASKRVGAIKCITVAATKRFISNKSNEV.

This sequence belongs to the AIM9 family.

It localises to the mitochondrion. The chain is Altered inheritance of mitochondria protein 9, mitochondrial (AIM9) from Saccharomyces cerevisiae (strain JAY291) (Baker's yeast).